The following is a 285-amino-acid chain: Probable endonuclease 4 (285 aa).

9 residues coordinate Zn(2+): histidine 69, histidine 109, glutamate 145, aspartate 179, histidine 182, histidine 216, aspartate 229, histidine 231, and glutamate 261.

It belongs to the AP endonuclease 2 family. Zn(2+) is required as a cofactor.

It carries out the reaction Endonucleolytic cleavage to 5'-phosphooligonucleotide end-products.. Functionally, endonuclease IV plays a role in DNA repair. It cleaves phosphodiester bonds at apurinic or apyrimidinic (AP) sites, generating a 3'-hydroxyl group and a 5'-terminal sugar phosphate. This is Probable endonuclease 4 from Salmonella typhimurium (strain LT2 / SGSC1412 / ATCC 700720).